We begin with the raw amino-acid sequence, 205 residues long: Ras-related protein RABB1a (205 aa).

Residue 13 to 20 participates in GTP binding; sequence GDTGVGKS. The Effector region motif lies at 35-43; that stretch reads HDLTIGVEF. GTP contacts are provided by residues 61–65, 119–122, and 149–150; these read DTAGQ, NKCD, and SA. The interval 179–205 is disordered; that stretch reads ANEPGITPGPFGGKDASSSQQRRGCCG. The span at 194 to 205 shows a compositional bias: polar residues; the sequence is ASSSQQRRGCCG. Residues C203 and C204 are each lipidated (S-geranylgeranyl cysteine).

The protein belongs to the small GTPase superfamily. Rab family.

The protein resides in the cell membrane. In terms of biological role, intracellular vesicle trafficking and protein transport. The sequence is that of Ras-related protein RABB1a (RABB1A) from Arabidopsis thaliana (Mouse-ear cress).